Reading from the N-terminus, the 684-residue chain is Dipeptidyl-peptidase 5 (684 aa).

Residues 1–24 (MNKKIFSMMAASIIGSAAMTPSAG) form the signal peptide. 3 WD repeats span residues 87 to 127 (DTES…TERR), 220 to 259 (KPWSGIEDFSWSPDGQNIAYASRKKTGMAYSLSTNSDIYI), and 323 to 363 (TFDY…GKIR). Active-site charge relay system residues include Ser542, Asp627, and His659.

The protein belongs to the peptidase S9C family. Homodimer.

It localises to the periplasm. In terms of biological role, catalyzes the removal of dipeptides from the N-terminus of oligopeptides. Prefers Ala and hydrophobic residues except Pro at the P1 position, and has no preference for P2 residues. Shows high dipeptidyl peptidase activity toward the synthetic substrates Lys-Ala-, Gly-Phe-, Met-Leu-, and Ser-Tyr-methylcoumaryl-7-amide (MCA), and slowly hydrolyzes Val-Tyr-MCA. Is likely involved in amino acid metabolism and bacterial growth of asaccharolytic P.gingivalis, that utilizes amino acids from extracellular proteinaceous nutrients as energy and carbon sources. The protein is Dipeptidyl-peptidase 5 of Porphyromonas gingivalis (strain ATCC 33277 / DSM 20709 / CIP 103683 / JCM 12257 / NCTC 11834 / 2561).